Reading from the N-terminus, the 244-residue chain is MTDLVYEQPLNEKIRSYLRLEYLSKQLCNNLNNDHQHRCFYPLFSLCELSERCDYRNEVLKDIERNLLQLSKWQELEHIDSKQITFYIEALTQARESLQRPERCGNQLKQDRFLSALRQRFGMPGACCNFDLPQLHFWLAKPWDERRQDYQAWVSHFEPLLTPIALLLQLTRSTADYAKATAHAGFYQGDSTQALSLVRVKVDAAHGCYPTISGHKNRFAIHFVQFDQQRHSDRSIEFLLATCA.

It belongs to the ZapD family. As to quaternary structure, interacts with FtsZ.

It is found in the cytoplasm. Functionally, cell division factor that enhances FtsZ-ring assembly. Directly interacts with FtsZ and promotes bundling of FtsZ protofilaments, with a reduction in FtsZ GTPase activity. This is Cell division protein ZapD from Shewanella oneidensis (strain ATCC 700550 / JCM 31522 / CIP 106686 / LMG 19005 / NCIMB 14063 / MR-1).